Reading from the N-terminus, the 283-residue chain is NFU1 iron-sulfur cluster scaffold homolog, mitochondrial (283 aa).

Residues 1 to 30 (MSKFLSQAALNTLRNTRLGSRQLVRSFAGI) constitute a mitochondrion transit peptide. The nifU stretch occupies residues 182–250 (IKELLDTRIR…IPEVESVEQV (69 aa)). Positions 219 and 222 each coordinate [4Fe-4S] cluster.

Belongs to the NifU family.

It is found in the mitochondrion. Molecular scaffold for [Fe-S] cluster assembly of mitochondrial iron-sulfur proteins. The chain is NFU1 iron-sulfur cluster scaffold homolog, mitochondrial from Drosophila erecta (Fruit fly).